The chain runs to 224 residues: Large ribosomal subunit protein bL25 (224 aa).

The disordered stretch occupies residues 190-224; sequence EPAPAAEGAAPAEGAAAAAAGGKPAAKTAKPAAKK.

It belongs to the bacterial ribosomal protein bL25 family. CTC subfamily. Part of the 50S ribosomal subunit; part of the 5S rRNA/L5/L18/L25 subcomplex. Contacts the 5S rRNA. Binds to the 5S rRNA independently of L5 and L18.

In terms of biological role, this is one of the proteins that binds to the 5S RNA in the ribosome where it forms part of the central protuberance. The chain is Large ribosomal subunit protein bL25 from Variovorax paradoxus (strain S110).